Reading from the N-terminus, the 187-residue chain is Elongation factor P (187 aa).

Belongs to the elongation factor P family.

It is found in the cytoplasm. The protein operates within protein biosynthesis; polypeptide chain elongation. Involved in peptide bond synthesis. Stimulates efficient translation and peptide-bond synthesis on native or reconstituted 70S ribosomes in vitro. Probably functions indirectly by altering the affinity of the ribosome for aminoacyl-tRNA, thus increasing their reactivity as acceptors for peptidyl transferase. In Synechococcus sp. (strain CC9605), this protein is Elongation factor P.